A 317-amino-acid polypeptide reads, in one-letter code: Inactive serine protease 45 (317 aa).

A signal peptide spans 1 to 35 (MATSLRGLDAGPGSLRRWILICFAALLLLPPRPNL). A glycan (N-linked (GlcNAc...) asparagine) is linked at asparagine 40. The Peptidase S1 domain maps to 44–291 (PVCGTPWWPD…YTIWIKDQVS (248 aa)). A disulfide bond links cysteine 75 and cysteine 91. N-linked (GlcNAc...) asparagine glycosylation is present at asparagine 110. 3 disulfide bridges follow: cysteine 172-cysteine 249, cysteine 207-cysteine 230, and cysteine 239-cysteine 267. Asparagine 272 carries an N-linked (GlcNAc...) asparagine glycan.

The protein belongs to the peptidase S1 family.

It is found in the secreted. The sequence is that of Inactive serine protease 45 from Mus musculus (Mouse).